Consider the following 166-residue polypeptide: NAD(P)H-quinone oxidoreductase subunit I, chloroplastic (166 aa).

4Fe-4S ferredoxin-type domains lie at 55–84 (GRIH…VDWK) and 95–124 (LNYS…MTEE). [4Fe-4S] cluster is bound by residues Cys-64, Cys-67, Cys-70, Cys-74, Cys-104, Cys-107, Cys-110, and Cys-114.

It belongs to the complex I 23 kDa subunit family. In terms of assembly, NDH is composed of at least 16 different subunits, 5 of which are encoded in the nucleus. Requires [4Fe-4S] cluster as cofactor.

The protein localises to the plastid. Its subcellular location is the chloroplast thylakoid membrane. It carries out the reaction a plastoquinone + NADH + (n+1) H(+)(in) = a plastoquinol + NAD(+) + n H(+)(out). The catalysed reaction is a plastoquinone + NADPH + (n+1) H(+)(in) = a plastoquinol + NADP(+) + n H(+)(out). Functionally, NDH shuttles electrons from NAD(P)H:plastoquinone, via FMN and iron-sulfur (Fe-S) centers, to quinones in the photosynthetic chain and possibly in a chloroplast respiratory chain. The immediate electron acceptor for the enzyme in this species is believed to be plastoquinone. Couples the redox reaction to proton translocation, and thus conserves the redox energy in a proton gradient. The protein is NAD(P)H-quinone oxidoreductase subunit I, chloroplastic of Laphamia lindheimeri (Lindheimer's rockdaisy).